The following is a 349-amino-acid chain: Glycerol-3-phosphate dehydrogenase [NAD(+)], cytoplasmic (349 aa).

NAD(+) is bound at residue 10–15 (GSGNWG). Residue lysine 120 coordinates substrate. Alanine 153 provides a ligand contact to NAD(+). A Phosphoserine modification is found at serine 154. The active-site Proton acceptor is lysine 204. Residue arginine 269 coordinates NAD(+). 269 to 270 (RN) is a substrate binding site. Lysine 289 carries the post-translational modification N6-succinyllysine. NAD(+) is bound by residues lysine 296 and glutamine 298. Tyrosine 326 bears the Phosphotyrosine mark.

This sequence belongs to the NAD-dependent glycerol-3-phosphate dehydrogenase family. In terms of assembly, homodimer.

The protein localises to the cytoplasm. It catalyses the reaction sn-glycerol 3-phosphate + NAD(+) = dihydroxyacetone phosphate + NADH + H(+). Its function is as follows. Has glycerol-3-phosphate dehydrogenase activity. The chain is Glycerol-3-phosphate dehydrogenase [NAD(+)], cytoplasmic from Rattus norvegicus (Rat).